The following is a 495-amino-acid chain: UDP-glycosyltransferase 73C25 (495 aa).

23–26 (GHMI) serves as a coordination point for UDP-alpha-D-glucose. His24 (proton acceptor) is an active-site residue. The active-site Charge relay is Asp129. UDP-alpha-D-glucose contacts are provided by residues 355–358 (WSPQ), 373–381 (HCGWNSTLE), and 397–398 (DQ).

This sequence belongs to the UDP-glycosyltransferase family.

Functionally, catalyzes the transfer of a glucose (Glc) moiety from UDP-Glc to the C-28 carboxylic group of oleanolate 3-O-beta-D-glucoside to form oleanolate 3,28-O-beta-D-diglucoside. The polypeptide is UDP-glycosyltransferase 73C25 (Barbarea vulgaris (Yellow rocket)).